The following is a 75-amino-acid chain: Accessory gland-specific peptide 57Da (75 aa).

The first 19 residues, methionine 1–alanine 19, serve as a signal peptide directing secretion. Residues alanine 55 to serine 75 form a disordered region. Residues alanine 56–serine 75 are compositionally biased toward low complexity.

As to expression, lumen fluid of male accessory glands, becomes seminal fluid.

The protein resides in the secreted. In terms of biological role, transferred from male to female during mating and may affect egglaying and behavior after mating. The chain is Accessory gland-specific peptide 57Da (Mst57Da) from Drosophila melanogaster (Fruit fly).